The following is a 455-amino-acid chain: Keratin, type I cuticular Ha5 (455 aa).

The segment at 1 to 97 is head; the sequence is MASKCLKASF…FGEGILTGNE (97 aa). Residues 97–408 form the IF rod domain; that stretch reads EKETMQFLND…GLLDSEDCKL (312 aa). The segment at 98–132 is coil 1A; sequence KETMQFLNDRLASYLEKVRQLERENAELESRIRDW. A linker 1 region spans residues 133–143; sequence CEQQVPYLCPD. Positions 144–244 are coil 1B; it reads YQSYFQTIEE…HEEEVNSLRC (101 aa). Positions 245–260 are linker 12; that stretch reads QLGDRLNVEVDAAPPV. The segment at 261 to 404 is coil 2; that stretch reads DLNRVLNEMR…STYRGLLDSE (144 aa). The tract at residues 405-455 is tail; it reads DCKLPCNPCAPDHSPSKSCLPCLPAASCGPGTAHTTCSPRPICVSCPGSRF.

It belongs to the intermediate filament family.

In Ovis aries (Sheep), this protein is Keratin, type I cuticular Ha5.